The primary structure comprises 379 residues: Chaperone protein DnaJ (379 aa).

Positions 5-69 constitute a J domain; sequence DYYEVLGISK…NKRATIDQFG (65 aa). A CR-type zinc finger spans residues 136–218; the sequence is GTTKEISIRK…CHGKGTENKT (83 aa). Cysteine 149, cysteine 152, cysteine 166, cysteine 169, cysteine 192, cysteine 195, cysteine 206, and cysteine 209 together coordinate Zn(2+). CXXCXGXG motif repeat units lie at residues 149–156, 166–173, 192–199, and 206–213; these read CETCHGDG, CSYCNGAG, CPKCNGSG, and CPTCHGKG.

Belongs to the DnaJ family. Homodimer. Requires Zn(2+) as cofactor.

It is found in the cytoplasm. Functionally, participates actively in the response to hyperosmotic and heat shock by preventing the aggregation of stress-denatured proteins and by disaggregating proteins, also in an autonomous, DnaK-independent fashion. Unfolded proteins bind initially to DnaJ; upon interaction with the DnaJ-bound protein, DnaK hydrolyzes its bound ATP, resulting in the formation of a stable complex. GrpE releases ADP from DnaK; ATP binding to DnaK triggers the release of the substrate protein, thus completing the reaction cycle. Several rounds of ATP-dependent interactions between DnaJ, DnaK and GrpE are required for fully efficient folding. Also involved, together with DnaK and GrpE, in the DNA replication of plasmids through activation of initiation proteins. The sequence is that of Chaperone protein DnaJ from Staphylococcus aureus.